Reading from the N-terminus, the 52-residue chain is Phospholamban (52 aa).

Met-1 is modified (N-acetylmethionine). Residues 1 to 31 lie on the Cytoplasmic side of the membrane; it reads MEKVQYLTRSAIRRASTIEMPQQARQKLQNL. Position 16 is a phosphoserine; by PKA and DMPK (Ser-16). An involved in HAX1 binding region spans residues 16 to 22; it reads STIEMPQ. A Phosphothreonine; by CaMK2 modification is found at Thr-17. Residues 32 to 52 traverse the membrane as a helical segment; that stretch reads FINFCLILICLLLICIIVMLL. Cys-36 carries the S-palmitoyl cysteine lipid modification.

It belongs to the phospholamban family. As to quaternary structure, homopentamer. Can also form heterooligomers with other sarcoplasmic/endoplasmic reticulum calcium ATPase (SERCA) regulators ARLN, ERLN, SLN and STRIT1/DWORF. Monomer. Interacts with HAX1. Interacts as a monomer with ATP2A2; the interaction decreases ATP2A2 Ca(2+) affinity. Interacts with VMP1; VMP1 competes with PLN and SLN to prevent them from forming an inhibitory complex with ATP2A2. Interacts with S100A1 in a Ca(2+)-dependent manner. Post-translationally, phosphorylation by PKA abolishes the inhibition of ATP2A2-mediated calcium uptake. Phosphorylated at Thr-17 by CaMK2, and in response to beta-adrenergic stimulation. Phosphorylation by DMPK may stimulate sarcoplasmic reticulum calcium uptake in cardiomyocytes. Palmitoylated by ZDHHC16, promoting formation of the homopentamer. In terms of processing, in elongated spermatids, proteolytically cleaved by SPPL2C which modulates intracellular Ca(2+) homeostasis. As to expression, heart muscle (at protein level).

It is found in the endoplasmic reticulum membrane. The protein localises to the sarcoplasmic reticulum membrane. Its subcellular location is the mitochondrion membrane. The protein resides in the membrane. Functionally, reversibly inhibits the activity of ATP2A2/SERCA2 in cardiac sarcoplasmic reticulum by decreasing the apparent affinity of the ATPase for Ca(2+). Binds preferentially to the ATP-bound E1 conformational form of ATP2A2 which predominates at low Ca(2+) concentrations during the diastolic phase of the cardiac cycle. Inhibits ATP2A2 Ca(2+) affinity by disrupting its allosteric activation by ATP. Modulates the contractility of the heart muscle in response to physiological stimuli via its effects on ATP2A2. Modulates calcium re-uptake during muscle relaxation and plays an important role in calcium homeostasis in the heart muscle. The degree of ATP2A2 inhibition depends on the oligomeric state of PLN. ATP2A2 inhibition is alleviated by PLN phosphorylation. Also inhibits the activity of ATP2A3/SERCA3. Controls intracellular Ca(2+) levels in elongated spermatids and may play a role in germ cell differentiation. In the thalamic reticular nucleus of the brain, plays a role in the regulation of sleep patterns and executive functioning. This is Phospholamban from Homo sapiens (Human).